The sequence spans 514 residues: Putative ankyrin repeat protein R863 (514 aa).

ANK repeat units follow at residues alanine 45–proline 74, lysine 84–serine 114, lysine 115–alanine 144, lysine 146–valine 174, aspartate 176–alanine 204, aspartate 205–alanine 234, asparagine 236–serine 264, asparagine 266–serine 294, glutamate 295–alanine 324, aspartate 325–serine 354, asparagine 356–serine 384, aspartate 385–valine 414, asparagine 415–alanine 444, asparagine 446–alanine 474, and asparagine 476–serine 504.

In Acanthamoeba polyphaga mimivirus (APMV), this protein is Putative ankyrin repeat protein R863.